Reading from the N-terminus, the 122-residue chain is Large ribosomal subunit protein bL17 (122 aa).

The protein belongs to the bacterial ribosomal protein bL17 family. Part of the 50S ribosomal subunit. Contacts protein L32.

This chain is Large ribosomal subunit protein bL17, found in Neisseria meningitidis serogroup B (strain ATCC BAA-335 / MC58).